Reading from the N-terminus, the 130-residue chain is Large ribosomal subunit protein bL19 (130 aa).

It belongs to the bacterial ribosomal protein bL19 family.

Its function is as follows. This protein is located at the 30S-50S ribosomal subunit interface and may play a role in the structure and function of the aminoacyl-tRNA binding site. This is Large ribosomal subunit protein bL19 from Methylorubrum populi (strain ATCC BAA-705 / NCIMB 13946 / BJ001) (Methylobacterium populi).